The chain runs to 435 residues: MTNENNNDSEFAELKIRGKIFKLPILKASIGEDVIDISRVSAEADCFTYDPGFMSTASCQSTITYIDGDKGILRHRGYDIKDLAEKSDFLEVAYLLIYGELPSGEQYNNFTKQVAHHSLVNERLHYLFQTFCSSSHPMAIMLAAVGSLSAFYPDLLNFKEADYELTAIRMIAKIPTIAAMSYKYSIGQPFIYPDNSLDFTENFLHMMFATPCTKYTVNPIIKNALNKIFILHADHEQNASTSTVRIAGSSGANPFACISTGIASLWGPAHGGANEAVINMLKEIGSSEYIPKYIAKAKDKNDPFRLMGFGHRVYKNYDPRAAVLKETCKEVLKELGQLDNNPLLQIAIELEAIALKDEYFIERKLYPNVDFYSGIIYKAMGIPSQMFTVLFAIARTVGWMAQWKEMHEDPEQKISRPRQLYTGYVHREYKGIRER.

Catalysis depends on residues H311 and D370.

Belongs to the citrate synthase family.

The enzyme catalyses oxaloacetate + acetyl-CoA + H2O = citrate + CoA + H(+). It functions in the pathway carbohydrate metabolism; tricarboxylic acid cycle; isocitrate from oxaloacetate: step 1/2. The protein is Citrate synthase (gltA) of Rickettsia slovaca (strain 13-B).